A 235-amino-acid polypeptide reads, in one-letter code: Hydroxyacylglutathione hydrolase (235 aa).

Zn(2+)-binding residues include His-53, His-55, Asp-57, His-58, His-109, Asp-127, and His-165.

The protein belongs to the metallo-beta-lactamase superfamily. Glyoxalase II family. In terms of assembly, monomer. Zn(2+) serves as cofactor.

It catalyses the reaction an S-(2-hydroxyacyl)glutathione + H2O = a 2-hydroxy carboxylate + glutathione + H(+). The protein operates within secondary metabolite metabolism; methylglyoxal degradation; (R)-lactate from methylglyoxal: step 2/2. Functionally, thiolesterase that catalyzes the hydrolysis of S-D-lactoyl-glutathione to form glutathione and D-lactic acid. In Haemophilus ducreyi (strain 35000HP / ATCC 700724), this protein is Hydroxyacylglutathione hydrolase.